We begin with the raw amino-acid sequence, 150 residues long: Cell division protein SepF (150 aa).

It belongs to the SepF family. Homodimer. Interacts with FtsZ.

Its subcellular location is the cytoplasm. Its function is as follows. Cell division protein that is part of the divisome complex and is recruited early to the Z-ring. Probably stimulates Z-ring formation, perhaps through the cross-linking of FtsZ protofilaments. Its function overlaps with FtsA. The chain is Cell division protein SepF from Clostridium botulinum (strain Kyoto / Type A2).